Consider the following 305-residue polypeptide: Serine/threonine-protein phosphatase PP2A catalytic subunit (305 aa).

Mn(2+) is bound by residues Asp53, His55, Asp81, and Asn113. His114 (proton donor) is an active-site residue. Mn(2+)-binding residues include His163 and His237.

Belongs to the PPP phosphatase family. PP-2A subfamily. Mn(2+) serves as cofactor.

The enzyme catalyses O-phospho-L-seryl-[protein] + H2O = L-seryl-[protein] + phosphate. It carries out the reaction O-phospho-L-threonyl-[protein] + H2O = L-threonyl-[protein] + phosphate. In Helianthus annuus (Common sunflower), this protein is Serine/threonine-protein phosphatase PP2A catalytic subunit.